The primary structure comprises 664 residues: MKTGLFFLCLLGTAAAIPTNARLLSDHSKPTAETVAPDNTAIPSLRAEAEENEKETAVSTEDDSHHKAEKSSVLKSKEESHEQSAEQGKSSSQELGLKDQEDSDGHLSVNLEYAPTEGTLDIKEDMSEPQEKKLSENTDFLAPGVSSFTDSNQQESITKREENQEQPRNYSHHQLNRSSKHSQGLRDQGNQEQDPNISNGEEEEEKEPGEVGTHNDNQERKTELPREHANSKQEEDNTQSDDILEESDQPTQVSKMQEDEFDQGNQEQEDNSNAEMEEENASNVNKHIQETEWQSQEGKTGLEAISNHKETEEKTVSEALLMEPTDDGNTTPRNHGVDDDGDDDGDDGGTDGPRHSASDDYFIPSQAFLEAERAQSIAYHLKIEEQREKVHENENIGTTEPGEHQEAKKAENSSNEEETSSEGNMRVHAVDSCMSFQCKRGHICKADQQGKPHCVCQDPVTCPPTKPLDQVCGTDNQTYASSCHLFATKCRLEGTKKGHQLQLDYFGACKSIPTCTDFEVIQFPLRMRDWLKNILMQLYEANSEHAGYLNEKQRNKVKKIYLDEKRLLAGDHPIDLLLRDFKKNYHMYVYPVHWQFSELDQHPMDRVLTHSELAPLRASLVPMEHCITRFFEECDPNKDKHITLKEWGHCFGIKEEDIDENLLF.

Positions 1–16 (MKTGLFFLCLLGTAAA) are cleaved as a signal peptide. Residues 25–34 (SDHSKPTAET) form an O-glycosylated at one additional site region. The interval 28-360 (SKPTAETVAP…DGPRHSASDD (333 aa)) is disordered. O-linked (GalNAc...) threonine glycosylation is found at Thr-31 and Thr-40. Residue Ser-44 is glycosylated (O-linked (GalNAc...) serine). Residues 62–84 (DDSHHKAEKSSVLKSKEESHEQS) show a composition bias toward basic and acidic residues. Phosphoserine is present on residues Ser-76, Ser-84, and Ser-92. Residues 85 to 94 (AEQGKSSSQE) show a composition bias toward polar residues. Residues 96–105 (GLKDQEDSDG) show a composition bias toward basic and acidic residues. O-linked (GalNAc...) threonine glycosylation occurs at Thr-116. Over residues 120 to 136 (LDIKEDMSEPQEKKLSE) the composition is skewed to basic and acidic residues. Polar residues predominate over residues 146-156 (SSFTDSNQQES). N-linked (GlcNAc...) asparagine glycosylation occurs at Asn-169. Residues 170–180 (YSHHQLNRSSK) are compositionally biased toward basic residues. Ser-171 carries the phosphoserine modification. 2 N-linked (GlcNAc...) asparagine glycosylation sites follow: Asn-176 and Asn-196. Residues 188–199 (QGNQEQDPNISN) are compositionally biased toward polar residues. A compositionally biased stretch (basic and acidic residues) spans 216-235 (DNQERKTELPREHANSKQEE). 2 stretches are compositionally biased toward acidic residues: residues 236 to 248 (DNTQSDDILEESD) and 259 to 280 (DEFDQGNQEQEDNSNAEMEEEN). Ser-272 bears the Phosphoserine mark. Asn-280 carries an N-linked (GlcNAc...) asparagine glycan. A compositionally biased stretch (basic and acidic residues) spans 306–316 (SNHKETEEKTV). Residue Thr-331 is glycosylated (O-linked (GalNAc...) threonine). Over residues 339-349 (DDGDDDGDDGG) the composition is skewed to acidic residues. 2 positions are modified to phosphoserine: Ser-358 and Ser-365. Residues 388 to 426 (EKVHENENIGTTEPGEHQEAKKAENSSNEEETSSEGNMR) form a disordered region. A glycan (O-linked (GalNAc...) threonine) is linked at Thr-398. Over residues 401 to 411 (PGEHQEAKKAE) the composition is skewed to basic and acidic residues. A glycan (N-linked (GlcNAc...) asparagine) is linked at Asn-412. Ser-420 carries the post-translational modification Phosphoserine. In terms of domain architecture, Follistatin-like spans 432 to 454 (SCMSFQCKRGHICKADQQGKPHC). Intrachain disulfides connect Cys-433–Cys-444, Cys-438–Cys-454, Cys-456–Cys-490, Cys-462–Cys-483, Cys-472–Cys-509, Cys-515–Cys-626, and Cys-634–Cys-650. In terms of domain architecture, Kazal-like spans 450-511 (GKPHCVCQDP…QLDYFGACKS (62 aa)). Asn-476 carries N-linked (GlcNAc...) asparagine glycosylation. Positions 622 to 657 (PMEHCITRFFEECDPNKDKHITLKEWGHCFGIKEED) constitute an EF-hand domain. Positions 635, 637, 639, 641, and 646 each coordinate Ca(2+).

This sequence belongs to the SPARC family. Post-translationally, N- and O-glycosylated. O-glycosylated with a core 1 or possibly core 8 glycan. Highly expressed in lymph node, brain, heart, lung, skeletal muscle, ovary, small intestine, and colon, with lower levels in placenta, pancreas, testis, spleen, and thymus, and no expression in kidney, liver, and peripheral blood leukocytes.

Its subcellular location is the secreted. The protein localises to the extracellular space. It localises to the extracellular matrix. The polypeptide is SPARC-like protein 1 (SPARCL1) (Homo sapiens (Human)).